Reading from the N-terminus, the 142-residue chain is Gonadotropin subunit beta-2 (142 aa).

A signal peptide spans 1-23; sequence MLGLHVGTLISLFLCILLEPIEG. Disulfide bonds link Cys-29/Cys-77, Cys-43/Cys-92, Cys-46/Cys-130, Cys-54/Cys-108, Cys-58/Cys-110, and Cys-113/Cys-120. The N-linked (GlcNAc...) asparagine glycan is linked to Asn-33.

It belongs to the glycoprotein hormones subunit beta family. As to quaternary structure, heterodimer of an alpha and a beta chain.

The protein localises to the secreted. Involved in gametogenesis and steroidogenesis. In Oncorhynchus tshawytscha (Chinook salmon), this protein is Gonadotropin subunit beta-2 (cgbb).